The primary structure comprises 314 residues: L-lactate dehydrogenase (314 aa).

NAD(+)-binding positions include V17, D38, K43, Y69, and 83–84 (GA). 2 residues coordinate substrate: Q86 and R92. NAD(+) is bound by residues S105, 122-124 (ASN), and S147. A substrate-binding site is contributed by 124–127 (NPVD). Residue 152 to 155 (DSAR) coordinates substrate. Residues R157 and H172 each coordinate beta-D-fructose 1,6-bisphosphate. Catalysis depends on H179, which acts as the Proton acceptor. Phosphotyrosine is present on Y223. T232 contacts substrate.

Belongs to the LDH/MDH superfamily. LDH family. As to quaternary structure, homotetramer.

It is found in the cytoplasm. The enzyme catalyses (S)-lactate + NAD(+) = pyruvate + NADH + H(+). It participates in fermentation; pyruvate fermentation to lactate; (S)-lactate from pyruvate: step 1/1. Allosterically activated by fructose 1,6-bisphosphate (FBP). Functionally, catalyzes the conversion of lactate to pyruvate. This Corynebacterium glutamicum (strain R) protein is L-lactate dehydrogenase.